The primary structure comprises 208 residues: 3-demethoxyubiquinol 3-hydroxylase (208 aa).

6 residues coordinate Fe cation: Glu-57, Glu-87, His-90, Glu-139, Glu-171, and His-174.

It belongs to the COQ7 family. The cofactor is Fe cation.

The protein resides in the cell membrane. It catalyses the reaction a 5-methoxy-2-methyl-3-(all-trans-polyprenyl)benzene-1,4-diol + AH2 + O2 = a 3-demethylubiquinol + A + H2O. Its pathway is cofactor biosynthesis; ubiquinone biosynthesis. Its function is as follows. Catalyzes the hydroxylation of 2-nonaprenyl-3-methyl-6-methoxy-1,4-benzoquinol during ubiquinone biosynthesis. The sequence is that of 3-demethoxyubiquinol 3-hydroxylase from Burkholderia cenocepacia (strain HI2424).